The following is a 105-amino-acid chain: Large ribosomal subunit protein bL21 (105 aa).

Belongs to the bacterial ribosomal protein bL21 family. Part of the 50S ribosomal subunit. Contacts protein L20.

In terms of biological role, this protein binds to 23S rRNA in the presence of protein L20. This is Large ribosomal subunit protein bL21 from Phocaeicola vulgatus (strain ATCC 8482 / DSM 1447 / JCM 5826 / CCUG 4940 / NBRC 14291 / NCTC 11154) (Bacteroides vulgatus).